We begin with the raw amino-acid sequence, 311 residues long: Formyltransferase/hydrolase complex subunit D (311 aa).

The protein belongs to the FTR family. In terms of assembly, homotetramer. Octaheteromer. Part of the formyltransferase/hydrolase complex fhc; composed of FhcA, FhcB, FhcC and FhcD.

Its subcellular location is the cytoplasm. It catalyses the reaction N-formylmethanofuran + 5,6,7,8-tetrahydromethanopterin + H(+) = N(5)-formyl-5,6,7,8-tetrahydromethanopterin + methanofuran. Its pathway is one-carbon metabolism; formaldehyde degradation; formate from formaldehyde (H(4)MPT route): step 4/5. Its function is as follows. Involved in the transformation of 5-formyl tetrahydromethanopterin (5-formyl-H(4)MPT) to methanofuran (MFR) and formate via the intermediate formylmethanofuran (formyl-MFR). Catalyzes the transfer of a formyl group from 5-formyl-H(4)MPT to MFR to produce tetrahydromethanopterin (H(4)MPT) and formyl-MFR, which is then hydrolyzed to formate and MFR. The protein is Formyltransferase/hydrolase complex subunit D of Methylorubrum extorquens (strain ATCC 14718 / DSM 1338 / JCM 2805 / NCIMB 9133 / AM1) (Methylobacterium extorquens).